A 28-amino-acid polypeptide reads, in one-letter code: GLMDMVKGAAKNLFASALDTLKCKITGC.

A disulfide bridge connects residues cysteine 23 and cysteine 28.

As to expression, expressed by the skin glands.

It is found in the secreted. Functionally, has antibacterial activity. In Rana arvalis (Moor frog), this protein is Ranatuerin-2AVb.